Reading from the N-terminus, the 400-residue chain is Malonyl CoA-acyl carrier protein transacylase (400 aa).

Active-site residues include Ser-92 and His-201.

Belongs to the FabD family.

It carries out the reaction holo-[ACP] + malonyl-CoA = malonyl-[ACP] + CoA. In terms of biological role, is involved in the mycosubtilin synthetase assembly, by catalyzing the transfer of malonyl groups to a specific acyl-carrier-protein domain on MycA. This is Malonyl CoA-acyl carrier protein transacylase (fenF) from Bacillus subtilis.